A 298-amino-acid polypeptide reads, in one-letter code: Urease accessory protein UreD 3 (298 aa).

Positions 1 to 30 are disordered; that stretch reads MADEAGTRSAGGRPIPAAEPLRPALSRQRS.

It belongs to the UreD family. As to quaternary structure, ureD, UreF and UreG form a complex that acts as a GTP-hydrolysis-dependent molecular chaperone, activating the urease apoprotein by helping to assemble the nickel containing metallocenter of UreC. The UreE protein probably delivers the nickel.

It localises to the cytoplasm. Functionally, required for maturation of urease via the functional incorporation of the urease nickel metallocenter. The protein is Urease accessory protein UreD 3 of Methylorubrum extorquens (strain PA1) (Methylobacterium extorquens).